A 365-amino-acid polypeptide reads, in one-letter code: 3-isopropylmalate dehydrogenase (365 aa).

Residues Arg-96, Arg-106, Arg-134, and Asp-224 each coordinate substrate. Asp-224, Asp-248, and Asp-252 together coordinate Mg(2+). Residue 288 to 300 coordinates NAD(+); it reads GSAPTIAKQNIAN.

The protein belongs to the isocitrate and isopropylmalate dehydrogenases family. LeuB type 1 subfamily. As to quaternary structure, homodimer. The cofactor is Mg(2+). Mn(2+) serves as cofactor.

The protein resides in the cytoplasm. It catalyses the reaction (2R,3S)-3-isopropylmalate + NAD(+) = 4-methyl-2-oxopentanoate + CO2 + NADH. The protein operates within amino-acid biosynthesis; L-leucine biosynthesis; L-leucine from 3-methyl-2-oxobutanoate: step 3/4. Functionally, catalyzes the oxidation of 3-carboxy-2-hydroxy-4-methylpentanoate (3-isopropylmalate) to 3-carboxy-4-methyl-2-oxopentanoate. The product decarboxylates to 4-methyl-2 oxopentanoate. This is 3-isopropylmalate dehydrogenase from Dehalococcoides mccartyi (strain ATCC BAA-2266 / KCTC 15142 / 195) (Dehalococcoides ethenogenes (strain 195)).